The sequence spans 322 residues: Short-chain dehydrogenase TIC 32, chloroplastic (322 aa).

Residues 36 to 42 (GASSGIG), 88 to 89 (DL), Asn115, and Thr136 contribute to the NADP(+) site. Ser170 is a substrate binding site. Tyr192 functions as the Proton acceptor in the catalytic mechanism. Residues 298–314 (DTELAKKVWDFSTKLTD) are interaction with calmodulin.

Belongs to the short-chain dehydrogenases/reductases (SDR) family. In terms of assembly, part of the Tic complex. Interacts with TIC110. Expressed in leaves and roots.

Its subcellular location is the plastid. It localises to the chloroplast inner membrane. Functionally, involved in protein precursor import into chloroplasts. Part of the redox regulon consisting of TIC32, TIC 55 and TIC62. In Arabidopsis thaliana (Mouse-ear cress), this protein is Short-chain dehydrogenase TIC 32, chloroplastic.